A 156-amino-acid polypeptide reads, in one-letter code: Probable chemoreceptor glutamine deamidase CheD (156 aa).

This sequence belongs to the CheD family.

The enzyme catalyses L-glutaminyl-[protein] + H2O = L-glutamyl-[protein] + NH4(+). In terms of biological role, probably deamidates glutamine residues to glutamate on methyl-accepting chemotaxis receptors (MCPs), playing an important role in chemotaxis. The chain is Probable chemoreceptor glutamine deamidase CheD from Sulfurimonas denitrificans (strain ATCC 33889 / DSM 1251) (Thiomicrospira denitrificans (strain ATCC 33889 / DSM 1251)).